Consider the following 376-residue polypeptide: 3-dehydroquinate synthase (376 aa).

Residues 115–119 (GVIGD), 139–140 (TS), Lys152, and Lys161 contribute to the NAD(+) site. Glu194, His256, and His275 together coordinate Zn(2+).

The protein belongs to the sugar phosphate cyclases superfamily. Dehydroquinate synthase family. Co(2+) serves as cofactor. Zn(2+) is required as a cofactor. Requires NAD(+) as cofactor.

The protein resides in the cytoplasm. The enzyme catalyses 7-phospho-2-dehydro-3-deoxy-D-arabino-heptonate = 3-dehydroquinate + phosphate. Its pathway is metabolic intermediate biosynthesis; chorismate biosynthesis; chorismate from D-erythrose 4-phosphate and phosphoenolpyruvate: step 2/7. Its function is as follows. Catalyzes the conversion of 3-deoxy-D-arabino-heptulosonate 7-phosphate (DAHP) to dehydroquinate (DHQ). In Rhizobium leguminosarum bv. trifolii (strain WSM2304), this protein is 3-dehydroquinate synthase.